A 478-amino-acid polypeptide reads, in one-letter code: Major facilitator superfamily domain-containing protein 12 (478 aa).

Met1 bears the N-acetylmethionine mark. Over 1 to 26 (MVPGSPAAGAGPAPRALSLAARLSYA) the chain is Cytoplasmic. A helical membrane pass occupies residues 27 to 47 (VGHFLNDLCASMWFTYLLLYL). Topologically, residues 48–56 (HSVRAYSSR) are lumenal. The helical transmembrane segment at 57–77 (GAGLLLLLGQVADGLCTPLVG) threads the bilayer. Residues 78–97 (YEADRAAGRCARCGPRKAWH) lie on the Cytoplasmic side of the membrane. A helical transmembrane segment spans residues 98–118 (LVGTVCVLLSFPFIFSPCLGC). Topologically, residues 119-124 (GAATPE) are lumenal. Residues 125–145 (WAALLYYGPFIVVFQFGWAAT) traverse the membrane as a helical segment. The Cytoplasmic portion of the chain corresponds to 146–168 (QIAHLSLIPELVTSDHEKVELTA). The chain crosses the membrane as a helical span at residues 169–189 (LRYAFTVVANITVFGAAWLLL). At 190 to 216 (RLQGSAREGPPDEAGDHLGVQDVPVFR) the chain is on the lumenal side. A helical transmembrane segment spans residues 217 to 237 (TLSLCVVGVGAVFSLLFHLGT). The Cytoplasmic portion of the chain corresponds to 238-277 (RERRRPPAQEPDERSPLLAPATARPLLLWKHWLREPSFYQ). Residues 278-300 (VGLLYMSTRLIVNLSQTYIAMYL) traverse the membrane as a helical segment. The Lumenal segment spans residues 301–308 (TYSLNLPK). A helical membrane pass occupies residues 309 to 329 (KFIATIPLVMYVSGFCSSFLM). Topologically, residues 330 to 338 (KPVNKCIGR) are cytoplasmic. A helical membrane pass occupies residues 339–359 (NMTYFVGLLVILAFAAWVVLV). At 360 to 361 (DE) the chain is on the lumenal side. Residues 362–382 (LGMAVYVAAVLLGGGCATILV) traverse the membrane as a helical segment. The Cytoplasmic segment spans residues 383-400 (TSLAMTADLIGPHTHSGA). A helical transmembrane segment spans residues 401–421 (FVYGAMSFSDKVANGLAVMVI). At 422–436 (QSLHPCSLELCCRAC) the chain is on the lumenal side. The helical transmembrane segment at 437-457 (VGFYHWVMVAVTGGVGVAATL) threads the bilayer. At 458 to 478 (SLCSLLVWPIRLRSWDPGAQP) the chain is on the cytoplasmic side.

This sequence belongs to the major facilitator superfamily.

The protein localises to the melanosome membrane. It localises to the lysosome membrane. It carries out the reaction L-cysteine(in) = L-cysteine(out). In terms of biological role, transporter that mediates the import of cysteine into melanosomes, thereby regulating skin/hair pigmentation. In melanosomes, cysteine import is required both for normal levels of cystine, the oxidized dimer of cysteine, and provide cysteine for the production of the cysteinyldopas used in pheomelanin synthesis, thereby regulating skin/hair pigmentation. Also catalyzes import of cysteine into lysosomes in non-pigmented cells, regulating lysosomal cystine and cysteine storage, which is essnetial for redox homeostasis. This is Major facilitator superfamily domain-containing protein 12 from Equus caballus (Horse).